We begin with the raw amino-acid sequence, 345 residues long: MTMETVESQHDGSITASLTESKSAHVQTQTGQNSIPALAQVSVAGSGTRRGSPAVTLVQLPSGQTIHVQGVIQTPQPWVIQSSEIHTVQVAAIAETDESAESEGVIDSHKRREILSRRPSYRKILNELSSDVPGVPKIEEERSEEEGTPPSIATMAVPTSIYQTSTGQYIAIAQGGTIQISNPGSDGVQGLQALTMTNSGAPPPGATIVQYAAQSADGTQQFFVPGSQVVVQDEETELAPSHMAAATGDMPTYQIRAPTAALPQGVVMAASPGSLHSPQQLAEEATRKRELRLMKNREAAKECRRRKKEYVKCLESRVAVLEVQNKKLIEELETLKDICSPKTDY.

Residues 88 to 147 form the KID domain; the sequence is VQVAAIAETDESAESEGVIDSHKRREILSRRPSYRKILNELSSDVPGVPKIEEERSEEEG. A phosphoserine mark is found at Ser102, Ser129, Ser271, Ser274, and Ser277. The 60-residue stretch at 286–345 folds into the bZIP domain; it reads TRKRELRLMKNREAAKECRRRKKEYVKCLESRVAVLEVQNKKLIEELETLKDICSPKTDY. The segment at 287–312 is basic motif; sequence RKRELRLMKNREAAKECRRRKKEYVK. The interval 314–335 is leucine-zipper; that stretch reads LESRVAVLEVQNKKLIEELETL.

It belongs to the bZIP family. In terms of assembly, binds DNA as a dimer. Interacts with FHL5. Interacts with CDC34. May interact with TSSK4. In terms of processing, isoform 9 is ubiquitinated by CDC34 and RAD6B in order to be degraded by the proteasome. Post-translationally, stimulated by phosphorylation. Phosphorylated on Ser-116 by TSSK4 in vitro. In terms of tissue distribution, expressed in testes (round spermatids) (at protein level). Isoform 14 is the major activator form in testes.

It is found in the nucleus. The protein resides in the cytoplasm. Functionally, transcriptional regulator that binds the cAMP response element (CRE), a sequence present in many viral and cellular promoters. Isoforms are either transcriptional activators or repressors. Plays a role in spermatogenesis and is involved in spermatid maturation. In terms of biological role, may play a role in the regulation of the circadian clock: acts as a transcriptional repressor of the core circadian component PER1 by directly binding to cAMP response elements in its promoter. This Homo sapiens (Human) protein is cAMP-responsive element modulator.